A 189-amino-acid chain; its full sequence is Testis-expressed protein 22 (189 aa).

A disordered region spans residues 1 to 120 (MDSRQQRPQR…TQSVPTPPLQ (120 aa)). Residues 14 to 24 (QWQLAQEQRQQ) show a composition bias toward low complexity. Basic and acidic residues predominate over residues 70 to 87 (IDERRRLALQRMQERTDT). The segment covering 103-114 (QQTETSPSTQSV) has biased composition (low complexity).

In terms of tissue distribution, mainly expressed in spermatocytes and spermatids in testis.

It localises to the cytoplasm. Its subcellular location is the cytoplasmic vesicle. The protein localises to the secretory vesicle. It is found in the acrosome. The chain is Testis-expressed protein 22 (Tex22) from Mus musculus (Mouse).